A 209-amino-acid chain; its full sequence is Large ribosomal subunit protein uL3 (209 aa).

Positions 128-163 are disordered; sequence FGGGSRTHGQSDRLRAPGSVGGSSDPSRTFRGTRMA.

This sequence belongs to the universal ribosomal protein uL3 family. In terms of assembly, part of the 50S ribosomal subunit. Forms a cluster with proteins L14 and L19.

Its function is as follows. One of the primary rRNA binding proteins, it binds directly near the 3'-end of the 23S rRNA, where it nucleates assembly of the 50S subunit. The protein is Large ribosomal subunit protein uL3 of Chlorobium phaeobacteroides (strain DSM 266 / SMG 266 / 2430).